We begin with the raw amino-acid sequence, 65 residues long: uncharacterized protein (65 aa).

Positions methionine 1–arginine 30 are disordered. Residues leucine 10 to arginine 23 show a composition bias toward pro residues.

This is an uncharacterized protein from Homo sapiens (Human).